A 380-amino-acid polypeptide reads, in one-letter code: Ribosomal RNA small subunit methyltransferase, mitochondrial (380 aa).

A mitochondrion-targeting transit peptide spans 1-26 (MILRLKDQTLIKINSTRSYLSSLVFR). 6 residues coordinate S-adenosyl-L-methionine: His-70, Leu-72, Gly-97, Glu-118, Asp-146, and Asn-161.

It belongs to the class I-like SAM-binding methyltransferase superfamily. rRNA adenine N(6)-methyltransferase family.

It localises to the mitochondrion. The enzyme catalyses adenosine(1914)/adenosine(1915) in 18S rRNA + 4 S-adenosyl-L-methionine = N(6)-dimethyladenosine(1914)/N(6)-dimethyladenosine(1915) in 18S rRNA + 4 S-adenosyl-L-homocysteine + 4 H(+). In terms of biological role, N6-adenine methyltransferase which modifies the AA dinucleotide at the plant mitochondrial 18S rRNA nucleotides A1914 and A1915. Not active as mitochondrial transcription factor. The sequence is that of Ribosomal RNA small subunit methyltransferase, mitochondrial from Arabidopsis thaliana (Mouse-ear cress).